We begin with the raw amino-acid sequence, 300 residues long: tRNA pseudouridine synthase B (300 aa).

D38 acts as the Nucleophile in catalysis.

This sequence belongs to the pseudouridine synthase TruB family. Type 1 subfamily.

It carries out the reaction uridine(55) in tRNA = pseudouridine(55) in tRNA. Its function is as follows. Responsible for synthesis of pseudouridine from uracil-55 in the psi GC loop of transfer RNAs. The chain is tRNA pseudouridine synthase B from Dehalococcoides mccartyi (strain ATCC BAA-2100 / JCM 16839 / KCTC 5957 / BAV1).